Consider the following 494-residue polypeptide: Probable cytosol aminopeptidase (494 aa).

Residues K260 and D265 each contribute to the Mn(2+) site. Residue K272 is part of the active site. The Mn(2+) site is built by D283, D342, and E344. R346 is an active-site residue.

This sequence belongs to the peptidase M17 family. Mn(2+) is required as a cofactor.

It is found in the cytoplasm. The enzyme catalyses Release of an N-terminal amino acid, Xaa-|-Yaa-, in which Xaa is preferably Leu, but may be other amino acids including Pro although not Arg or Lys, and Yaa may be Pro. Amino acid amides and methyl esters are also readily hydrolyzed, but rates on arylamides are exceedingly low.. It catalyses the reaction Release of an N-terminal amino acid, preferentially leucine, but not glutamic or aspartic acids.. Functionally, presumably involved in the processing and regular turnover of intracellular proteins. Catalyzes the removal of unsubstituted N-terminal amino acids from various peptides. This is Probable cytosol aminopeptidase from Bacillus mycoides (strain KBAB4) (Bacillus weihenstephanensis).